The following is a 118-amino-acid chain: uncharacterized protein (118 aa).

Residues 95–115 (IIINLVIILAMYAPEIIGKLL) traverse the membrane as a helical segment.

It belongs to the M.jannaschii MJ0023/MJ0349/MJ1072/MJ1074/MJ1107/MJECL16 family.

It localises to the membrane. This is an uncharacterized protein from Methanocaldococcus jannaschii (strain ATCC 43067 / DSM 2661 / JAL-1 / JCM 10045 / NBRC 100440) (Methanococcus jannaschii).